A 399-amino-acid polypeptide reads, in one-letter code: MATDDDGTPNWSELVTDILSLVFKHLSFTDFARAKTVCSSWYFASKSSSPRKNHTPWLILYQDTHWLMFNSDEEKFYRTVYLGRFAECRGVASCGSWVLVFDKEINFYIINPFTPQLIRLPPLEYSNTGTKFERPGNYVFHLLFDDRHRTSRAIVGNSVLWVDEKTKDYLVVWSYKEAFVPSPYIYYCSKRGQEWFEIPASTCGKLFRCLDMAYKDEKLYILTSNGSIRILDFSLGDLPRQIDNHPYSHRPFVTEFPNHKMGMRLTTSGDVVMIQCVTTGTHKRSPFRIFKLSSITETKESSHEVVGWETVHSFEDEESLVWDLSVTLPTKGVSGIKKDSIYYCHTSLSSSIRETCAYEIPTHKITAYDIPKQDIKPIRHRGILIGEARWFVPCFGAGE.

The F-box domain occupies 9–56 (PNWSELVTDILSLVFKHLSFTDFARAKTVCSSWYFASKSSSPRKNHTP).

The sequence is that of F-box protein At1g10110 from Arabidopsis thaliana (Mouse-ear cress).